The primary structure comprises 802 residues: MKLSLDWMNDFTPLKEVGLDVILKKIAVSVCEIDGVVPFRPELDFVKIVRIESLDKHPSADKLQIAEVFDGSSKSQIVTGATNVKVGDLVPLAIPGAKLGDREILESELRGVKSSGMFCSEKELSLSEESSGVWILNGIEGAEIGKTIRSFLYYEDIIFEIDNKSITHRPDLWSHFGFARELASQLRLPITFNPFESLWNFDLSMKLPRVLENQNAHSYYASSICEVFVIPSKRKFQSRLQKCGIRVINNVVDVSNYVMLEMGQPTHFFDKRFLESQGGVSLEVSYAKKGESFALLDETSPSLEEEILLIRNQGRPVAVAGVMGGKESAVQNNTTEIVMESAVFAREKIRKSIRSTGIRSDSSVRYEKGLEATTTLPVIRRALNLLKENGCPSLKASEPVGFLHTPHKEVRIHTDIHFINTKLGITLSQGDITDILERLHFMVSWKGDRLEALVPKFRHNYDVTIPEDLVEEIGRTRGYDTIQVTPLLAEIKTPIRNLSRELERKCKTFFSVGLGYHEVYNYSFQALKENELDGDVELSVKIRNEMPEEQSVLRNSLISSLLKNIRTNQDRFSEIKIFEFGRAYFNIPEPDNEKKFFSFAVSFDRKSSESDLGLLEDDFLKVRKEIESFLKYIRIFEYFWDIKPEIFFHPGASLSLIVDSKQIGNLGYVHPAVLDSFELKKRVIYGSLEFEKLVEIWNTNRNISRFNVPSQFPEAEIDISILIGEKENTNLFTDLVRREKIPELQEGWVYSQFAGGSVPVGKRSVSYRFRLVNYEKTFTQERIKEISDHLVALAGKNGFVLR.

The tRNA-binding domain occupies 40–149 (RPELDFVKIV…EGAEIGKTIR (110 aa)). In terms of domain architecture, B5 spans 407–484 (HKEVRIHTDI…RTRGYDTIQV (78 aa)). Residues D462, D468, E471, and E472 each coordinate Mg(2+). Positions 710–802 (SQFPEAEIDI…LAGKNGFVLR (93 aa)) constitute an FDX-ACB domain.

The protein belongs to the phenylalanyl-tRNA synthetase beta subunit family. Type 1 subfamily. Tetramer of two alpha and two beta subunits. Requires Mg(2+) as cofactor.

The protein resides in the cytoplasm. The catalysed reaction is tRNA(Phe) + L-phenylalanine + ATP = L-phenylalanyl-tRNA(Phe) + AMP + diphosphate + H(+). This Leptospira borgpetersenii serovar Hardjo-bovis (strain L550) protein is Phenylalanine--tRNA ligase beta subunit.